Reading from the N-terminus, the 155-residue chain is uncharacterized protein (155 aa).

The disordered stretch occupies residues 135–155 (SQANSKNDSNSKDDLPNPFSV).

This is an uncharacterized protein from Acidianus convivator (ATV).